Here is a 198-residue protein sequence, read N- to C-terminus: MQFEVKDLINKIKKDGLDEAERLSSEIILNAKQEAEAIILKAESEAKELKIKAEKEAYDYKRYSLEASRQAFRDLVIGTENSIKSLFKSALKDSVSSVYDSNFLRELIIRVLDVWGKDDKIDIMLNESDIDNLSSILKTSIRNKFGAEIEIKPFKGINKGFKVQQRDGSLYYDFTSEAIADILFEYLNPRFKEIIKLD.

This sequence belongs to the V-ATPase E subunit family.

Functionally, produces ATP from ADP in the presence of a proton gradient across the membrane. The chain is V-type proton ATPase subunit E from Borrelia duttonii (strain Ly).